The sequence spans 201 residues: Lipopolysaccharide core heptose(II)-phosphate phosphatase (201 aa).

An N-terminal signal peptide occupies residues 1 to 33 (MLAFTLRFIKNKRYFAILAGALVIIAGLASQHA).

The protein belongs to the phosphoglycerate mutase family. Ais subfamily.

It localises to the periplasm. The protein operates within bacterial outer membrane biogenesis; lipopolysaccharide metabolism. Its function is as follows. Catalyzes the dephosphorylation of heptose(II) of the outer membrane lipopolysaccharide core. The sequence is that of Lipopolysaccharide core heptose(II)-phosphate phosphatase from Salmonella typhi.